A 369-amino-acid polypeptide reads, in one-letter code: Anthranilate phosphoribosyltransferase (369 aa).

5-phospho-alpha-D-ribose 1-diphosphate is bound by residues G99, G102–D103, N109–T112, K127–S135, and S139. Residue G99 participates in anthranilate binding. Residue S111 coordinates Mg(2+). Residue N130 coordinates anthranilate. An anthranilate-binding site is contributed by R185. The Mg(2+) site is built by D244 and E245.

The protein belongs to the anthranilate phosphoribosyltransferase family. In terms of assembly, homodimer. The cofactor is Mg(2+).

It catalyses the reaction N-(5-phospho-beta-D-ribosyl)anthranilate + diphosphate = 5-phospho-alpha-D-ribose 1-diphosphate + anthranilate. It functions in the pathway amino-acid biosynthesis; L-tryptophan biosynthesis; L-tryptophan from chorismate: step 2/5. Its function is as follows. Catalyzes the transfer of the phosphoribosyl group of 5-phosphorylribose-1-pyrophosphate (PRPP) to anthranilate to yield N-(5'-phosphoribosyl)-anthranilate (PRA). In Psychrobacter sp. (strain PRwf-1), this protein is Anthranilate phosphoribosyltransferase.